Consider the following 614-residue polypeptide: Zinc metalloproteinase-disintegrin-like HR1b (614 aa).

An N-terminal signal peptide occupies residues 1–20 (MIQVLLVTICLAVFPYQGSS). The propeptide occupies 21-191 (IILESGNVND…KASKLVVTAE (171 aa)). Gln-192 is modified (pyrrolidone carboxylic acid). Residues 198–394 (RYIKLAIVVD…HKPQCILNAP (197 aa)) form the Peptidase M12B domain. Asn-264 carries an N-linked (GlcNAc...) asparagine glycan. Intrachain disulfides connect Cys-309–Cys-389, Cys-349–Cys-373, and Cys-351–Cys-356. Position 334 (His-334) interacts with Zn(2+). Glu-335 is a catalytic residue. Positions 338 and 344 each coordinate Zn(2+). Residue Asn-372 is glycosylated (N-linked (GlcNAc...) asparagine). A propeptide spanning residues 395–398 (SKTD) is cleaved from the precursor. The Disintegrin domain occupies 402 to 488 (PPVCGNELLE…DCPTDRFHRN (87 aa)). The Ca(2+) site is built by Val-404, Asn-407, Leu-409, Glu-411, Glu-414, and Asp-417. 22 cysteine pairs are disulfide-bonded: Cys-405-Cys-424, Cys-405-Cys-434, Cys-416-Cys-429, Cys-416-Cys-434, Cys-418-Cys-424, Cys-428-Cys-451, Cys-442-Cys-448, Cys-447-Cys-473, Cys-460-Cys-480, Cys-467-Cys-492, Cys-467-Cys-499, Cys-492-Cys-504, Cys-499-Cys-504, Cys-511-Cys-526, Cys-511-Cys-561, Cys-526-Cys-568, Cys-539-Cys-549, Cys-549-Cys-556, Cys-556-Cys-593, Cys-561-Cys-568, Cys-587-Cys-598, and Cys-593-Cys-598. The D/ECD-tripeptide motif lies at 466 to 468 (ECD). Asn-518 is a glycosylation site (N-linked (GlcNAc...) asparagine). An N-linked (GlcNAc...) asparagine glycan is attached at Asn-571. Residues 608–614 (TTVFSLI) constitute a propeptide that is removed on maturation.

It belongs to the venom metalloproteinase (M12B) family. P-III subfamily. P-IIIb sub-subfamily. As to quaternary structure, monomer. It depends on Zn(2+) as a cofactor. Expressed by the venom gland.

The protein localises to the secreted. In terms of biological role, zinc protease that induces hemorrhage. Has preference for Tyr, Leu, Arg, Met, and Phe at the P1 position, in descending order (in vitro). Shows equal preference for the sequences of Ala-Asp and Arg-Ile at the P3-P2 position with different enzyme cleavage sites across the P1 position: the N-terminus side for Ala-Asp and the C-terminus side for Arg-Ile. Its function is as follows. Inhibits platelet aggregation induced by ADP, thrombin, platelet-activating factor and collagen. Acts by inhibiting fibrinogen interaction with platelet receptors alpha-IIb/beta-3 (ITGA2B/ITGB3). This Protobothrops flavoviridis (Habu) protein is Zinc metalloproteinase-disintegrin-like HR1b.